A 61-amino-acid chain; its full sequence is Small ribosomal subunit protein uS14 (61 aa).

Positions 24, 27, 40, and 43 each coordinate Zn(2+).

Belongs to the universal ribosomal protein uS14 family. Zinc-binding uS14 subfamily. As to quaternary structure, part of the 30S ribosomal subunit. Contacts proteins S3 and S10. Zn(2+) serves as cofactor.

Its function is as follows. Binds 16S rRNA, required for the assembly of 30S particles and may also be responsible for determining the conformation of the 16S rRNA at the A site. This is Small ribosomal subunit protein uS14 from Mesoplasma florum (strain ATCC 33453 / NBRC 100688 / NCTC 11704 / L1) (Acholeplasma florum).